Consider the following 757-residue polypeptide: MNIQQIVKEKGLGLLFRQGTVGIEKESQRVHADGSIVTSEHPKAFGNRSYHPYIQTDFAESQLELITPPNKKIEDTLRWLSALHEVTLRTIDENEYIFPMSMPAGLPPEQEIRVAQLDNAADVAYREHLVASYGKAKQMVSGIHYNFQLDPKLVETLFNAQTDYKSAVDFQNNLYLKMAKNFLRYQWIPLYLLSATPTVEANYFKDGSPLKPNQYVRSLRSSKYGYVNAPDIIVSFDSIEKYVETLEHWVNSGRLIAEKEFYSNVRLRGAKKAREFLHTGIQYLEFRLFDLNPFEAYGINLKDAKFIHHFILLMIWLEETADQDAVELGRARLGEVAFEDPHSETAYRDEGEQIINQLIDMLKAIGAEQSAVEFAEEKLAQFANPGQTLCARLVDAIEQAGGYQQLGGEIAKRNKVQAFERFYALSAFDNMELSTQALMFDAIQKGLNMEILDENDQFLRLQFGDHFEYVKNGNMTSHDSYISPLIMENKVVTKKVLAKAGFNVPQSLEFTSVEQAVASYPLFEGKAVVIKPKSTNFGLGISIFQQGVHDKADFAKAVEIAFREDKEVMVEDYLVGTEYRFFVLGNETLAVLLRVPANVMGDGVHTVAELVAAKNDHPLRGDGSRTPLKKIALGEIEQLQLKEQGLTVDSVPAKDQLVQLRANSNISTGGDSIDMTDEMHPSYKDLAVGITKAMGAAVCGVDLIIPDLKKPAEPNLSSWGVIEANFNPMMMMHIFPYSGKSRRLTLNVLGMLFPELV.

The interval 1–337 is glutamate--cysteine ligase; the sequence is MNIQQIVKEK…LGRARLGEVA (337 aa). Residues 494-757 form the ATP-grasp domain; it reads KKVLAKAGFN…VLGMLFPELV (264 aa). Residue 521-580 participates in ATP binding; that stretch reads PLFEGKAVVIKPKSTNFGLGISIFQQGVHDKADFAKAVEIAFREDKEVMVEDYLVGTEYR. Residues D702, E723, and N725 each coordinate Mg(2+). The Mn(2+) site is built by D702, E723, and N725.

In the N-terminal section; belongs to the glutamate--cysteine ligase type 1 family. Type 2 subfamily. In terms of assembly, monomer. It depends on Mg(2+) as a cofactor. Requires Mn(2+) as cofactor.

The enzyme catalyses L-cysteine + L-glutamate + ATP = gamma-L-glutamyl-L-cysteine + ADP + phosphate + H(+). It catalyses the reaction gamma-L-glutamyl-L-cysteine + glycine + ATP = glutathione + ADP + phosphate + H(+). Its pathway is sulfur metabolism; glutathione biosynthesis; glutathione from L-cysteine and L-glutamate: step 1/2. It functions in the pathway sulfur metabolism; glutathione biosynthesis; glutathione from L-cysteine and L-glutamate: step 2/2. In terms of biological role, synthesizes glutathione from L-glutamate and L-cysteine via gamma-L-glutamyl-L-cysteine. This Mannheimia succiniciproducens (strain KCTC 0769BP / MBEL55E) protein is Glutathione biosynthesis bifunctional protein GshAB.